Here is a 495-residue protein sequence, read N- to C-terminus: Putative aldehyde dehydrogenase AldA (495 aa).

NAD(+) is bound at residue 212–218; the sequence is GKGSESG. Catalysis depends on residues Glu256 and Cys290.

The protein belongs to the aldehyde dehydrogenase family.

The catalysed reaction is an aldehyde + NAD(+) + H2O = a carboxylate + NADH + 2 H(+). This is Putative aldehyde dehydrogenase AldA (aldA) from Staphylococcus aureus (strain MRSA252).